The chain runs to 327 residues: Embigin (327 aa).

A signal peptide spans 1-32 (MRALPGLLEARARTPRLLLLQCLLAAARPSSA). The Extracellular segment spans residues 33–260 (DGSAPDSPFT…ELVVLSYLVP (228 aa)). 9 N-linked (GlcNAc...) asparagine glycosylation sites follow: N54, N61, N75, N85, N100, N189, N196, N213, and N218. Ig-like V-type domains are found at residues 71-158 (PVEK…NFKV) and 159-253 (PELH…IELV). Cystine bridges form between C88–C142 and C180–C237. A helical transmembrane segment spans residues 261–281 (LKPFLVIVAEVILLVATILLC). Topologically, residues 282–327 (EKYTQKKKKHSDEGKEFEQIEQLKSDDSNGIENNVPRHRKNESLGQ) are cytoplasmic. Positions 287-327 (KKKKHSDEGKEFEQIEQLKSDDSNGIENNVPRHRKNESLGQ) are disordered. The span at 291-308 (HSDEGKEFEQIEQLKSDD) shows a compositional bias: basic and acidic residues. Residue S309 is modified to Phosphoserine.

Interacts with SLC16A1, SLC16A6 and SLC16A7.

Its subcellular location is the cell membrane. The protein resides in the synapse. Its function is as follows. Plays a role in the outgrowth of motoneurons and in the formation of neuromuscular junctions. Following muscle denervation, promotes nerve terminal sprouting and the formation of additional acetylcholine receptor clusters at synaptic sites without affecting terminal Schwann cell number or morphology. Delays the retraction of terminal sprouts following re-innervation of denervated endplates. May play a role in targeting the monocarboxylate transporters SLC16A1, SLC16A6 and SLC16A7 to the cell membrane. The protein is Embigin (EMB) of Homo sapiens (Human).